The chain runs to 421 residues: Trimethyllysine dioxygenase, mitochondrial (421 aa).

Residues 1–15 (MWCHRLSHLQSRLQD) constitute a mitochondrion transit peptide. Position 236 is an N6-acetyllysine (K236). The Fe cation site is built by H242, D244, and H389.

This sequence belongs to the gamma-BBH/TMLD family. As to quaternary structure, homodimer. Fe(2+) is required as a cofactor. Requires L-ascorbate as cofactor.

The protein resides in the mitochondrion matrix. The catalysed reaction is N(6),N(6),N(6)-trimethyl-L-lysine + 2-oxoglutarate + O2 = (3S)-3-hydroxy-N(6),N(6),N(6)-trimethyl-L-lysine + succinate + CO2. It participates in amine and polyamine biosynthesis; carnitine biosynthesis. Functionally, converts trimethyllysine (TML) into hydroxytrimethyllysine (HTML). In Bos taurus (Bovine), this protein is Trimethyllysine dioxygenase, mitochondrial (TMLHE).